Reading from the N-terminus, the 387-residue chain is S-adenosylmethionine synthase (387 aa).

His-15 is an ATP binding site. Asp-17 contributes to the Mg(2+) binding site. Residue Glu-43 participates in K(+) binding. 2 residues coordinate L-methionine: Glu-56 and Gln-99. The segment at 99–109 is flexible loop; sequence QSPDIAQGVNN. Residues 166–168, 232–233, Asp-241, 247–248, Ala-264, and Lys-268 each bind ATP; these read DAK, RF, and RK. Asp-241 is an L-methionine binding site. Position 272 (Lys-272) interacts with L-methionine.

It belongs to the AdoMet synthase family. As to quaternary structure, homotetramer; dimer of dimers. The cofactor is Mg(2+). K(+) is required as a cofactor.

It localises to the cytoplasm. The enzyme catalyses L-methionine + ATP + H2O = S-adenosyl-L-methionine + phosphate + diphosphate. The protein operates within amino-acid biosynthesis; S-adenosyl-L-methionine biosynthesis; S-adenosyl-L-methionine from L-methionine: step 1/1. In terms of biological role, catalyzes the formation of S-adenosylmethionine (AdoMet) from methionine and ATP. The overall synthetic reaction is composed of two sequential steps, AdoMet formation and the subsequent tripolyphosphate hydrolysis which occurs prior to release of AdoMet from the enzyme. The protein is S-adenosylmethionine synthase of Methylobacillus flagellatus (strain ATCC 51484 / DSM 6875 / VKM B-1610 / KT).